The chain runs to 228 residues: MTRKIIAVIPASGVGSRMQAGLPKQYLKLQNKTILEHTLEIFLAHPDIEKIVVAVAETDPFYPQVALLDSPKIQIVFGGETRAHSVFNALQVIEDDSWVLVHDAARPCLKRSDLDKLLQIDDKQGAILATPAIDTMKRADGNKIMRTEDRSTLWHALTPQFFPTRLLKQALISAFKKNLTVTDEASAMEFNGYQPRLIAGRSDNLKITRPEDLALAEFYLTQNTEKKI.

It belongs to the IspD/TarI cytidylyltransferase family. IspD subfamily.

The catalysed reaction is 2-C-methyl-D-erythritol 4-phosphate + CTP + H(+) = 4-CDP-2-C-methyl-D-erythritol + diphosphate. The protein operates within isoprenoid biosynthesis; isopentenyl diphosphate biosynthesis via DXP pathway; isopentenyl diphosphate from 1-deoxy-D-xylulose 5-phosphate: step 2/6. Functionally, catalyzes the formation of 4-diphosphocytidyl-2-C-methyl-D-erythritol from CTP and 2-C-methyl-D-erythritol 4-phosphate (MEP). This is 2-C-methyl-D-erythritol 4-phosphate cytidylyltransferase from Actinobacillus pleuropneumoniae serotype 3 (strain JL03).